We begin with the raw amino-acid sequence, 409 residues long: Tyrosine--tRNA ligase (409 aa).

Tyr-35 is an L-tyrosine binding site. The 'HIGH' region motif lies at 40 to 49; it reads PTGSSLHVGH. 2 residues coordinate L-tyrosine: Tyr-168 and Gln-172. A 'KMSKS' region motif is present at residues 228-232; sequence KMGKT. Lys-231 is a binding site for ATP. The S4 RNA-binding domain maps to 339–404; that stretch reads IKVTDLFVQV…AGKKRVVRIV (66 aa).

Belongs to the class-I aminoacyl-tRNA synthetase family. TyrS type 1 subfamily. As to quaternary structure, homodimer.

It localises to the cytoplasm. The catalysed reaction is tRNA(Tyr) + L-tyrosine + ATP = L-tyrosyl-tRNA(Tyr) + AMP + diphosphate + H(+). In terms of biological role, catalyzes the attachment of tyrosine to tRNA(Tyr) in a two-step reaction: tyrosine is first activated by ATP to form Tyr-AMP and then transferred to the acceptor end of tRNA(Tyr). The polypeptide is Tyrosine--tRNA ligase (Treponema pallidum (strain Nichols)).